Here is an 825-residue protein sequence, read N- to C-terminus: Beta-glucosidase (825 aa).

An N-terminal signal peptide occupies residues 1-20 (MLLPLYGLASFLVLSQAALV). N-linked (GlcNAc...) asparagine glycosylation is found at Asn21, Asn74, Asn97, Asn230, and Asn271. The active site involves Asp299. Residues Asn328, Asn335, Asn537, Asn550, Asn556, Asn578, Asn667, Asn690, Asn718, Asn733, and Asn761 are each glycosylated (N-linked (GlcNAc...) asparagine).

It belongs to the glycosyl hydrolase 3 family. In terms of assembly, homotetramer.

The catalysed reaction is Hydrolysis of terminal, non-reducing beta-D-glucosyl residues with release of beta-D-glucose.. The protein operates within glycan metabolism; cellulose degradation. The chain is Beta-glucosidase from Wickerhamomyces anomalus (Yeast).